Reading from the N-terminus, the 315-residue chain is Protoheme IX farnesyltransferase (315 aa).

9 consecutive transmembrane segments (helical) span residues 21-41 (YFAL…LVGL), 52-74 (VGFC…NMWW), 98-118 (GEAL…LALA), 121-141 (LLAA…YSMW), 150-170 (IVIG…AATG), 177-197 (VLMF…LALF), 223-243 (ILVY…TPVA), 246-266 (LYLA…WDIW), and 284-304 (FFKF…AEAI).

Belongs to the UbiA prenyltransferase family. Protoheme IX farnesyltransferase subfamily. In terms of assembly, interacts with CtaA.

It localises to the cell inner membrane. The catalysed reaction is heme b + (2E,6E)-farnesyl diphosphate + H2O = Fe(II)-heme o + diphosphate. Its pathway is porphyrin-containing compound metabolism; heme O biosynthesis; heme O from protoheme: step 1/1. In terms of biological role, converts heme B (protoheme IX) to heme O by substitution of the vinyl group on carbon 2 of heme B porphyrin ring with a hydroxyethyl farnesyl side group. The protein is Protoheme IX farnesyltransferase of Dinoroseobacter shibae (strain DSM 16493 / NCIMB 14021 / DFL 12).